The sequence spans 1780 residues: Chitin synthase Vb (1780 aa).

N-linked (GlcNAc...) asparagine glycosylation is found at Asn-133, Asn-153, Asn-629, Asn-644, Asn-655, and Asn-660. 2 consecutive transmembrane segments (helical) span residues 740–760 and 776–796; these read AWIA…LKFI and FVLF…IIGF. The Cytochrome b5 heme-binding domain maps to 805–866; it reads NKAWNVKEVA…LSGMVMDNYF (62 aa). N-linked (GlcNAc...) asparagine glycosylation is found at Asn-888 and Asn-1009. A helical transmembrane segment spans residues 1046–1066; sequence LLLAFAIIICIVTAVKFLAAL. Asn-1411 is a glycosylation site (N-linked (GlcNAc...) asparagine). Helical transmembrane passes span 1442–1462, 1469–1489, and 1497–1517; these read LCGT…IYIL, IPYI…LIFI, and IGWM…LPLY. Asn-1524 is a glycosylation site (N-linked (GlcNAc...) asparagine). A disordered region spans residues 1649 to 1691; sequence TGVHDMRSQSPYQDYPGQHPSVSNLRGQANLSPATGGGHSRSG. Residues 1668-1681 show a composition bias toward polar residues; it reads PSVSNLRGQANLSP. The DEK-C domain occupies 1722-1778; it reads GPNDMAIVESIRSVLCEVDLDTVTKKQVRALVEQRLQTELVGERRTFMDRQIDHELE.

It belongs to the chitin synthase family. Class VII subfamily.

It localises to the cell membrane. It carries out the reaction [(1-&gt;4)-N-acetyl-beta-D-glucosaminyl](n) + UDP-N-acetyl-alpha-D-glucosamine = [(1-&gt;4)-N-acetyl-beta-D-glucosaminyl](n+1) + UDP + H(+). In terms of biological role, polymerizes chitin, a structural polymer of the cell wall and septum, by transferring the sugar moiety of UDP-GlcNAc to the non-reducing end of the growing chitin polymer. ChsV and chsVb do perform additive, but not redundant, functions in septum formation. Functions not only in the maintenance of cell wall integrity under different osmotic conditions but also in polarized cell wall synthesis. Plays an important role in the complex infection process of this fungus. This is Chitin synthase Vb from Fusarium oxysporum f. sp. lycopersici (strain 4287 / CBS 123668 / FGSC 9935 / NRRL 34936) (Fusarium vascular wilt of tomato).